Reading from the N-terminus, the 474-residue chain is Hepatocyte nuclear factor 4-alpha (474 aa).

The segment at residues 57–132 (SALCAICGDR…AGMKKEAVQN (76 aa)) is a DNA-binding region (nuclear receptor). NR C4-type zinc fingers lie at residues 60 to 80 (CAICGDRATGKHYGASSCDGC) and 96 to 120 (CRFSRQCVVDKDKRNQCRYCRLKKC). Serine 142 and serine 143 each carry phosphoserine; by PKA. At tyrosine 144 the chain carries Phosphotyrosine. Residues 147 to 377 (SSLPSINALL…NLLQEMLLGG (231 aa)) form the NR LBD domain. Threonine 166 carries the post-translational modification Phosphothreonine. At serine 167 the chain carries Phosphoserine. Residues lysine 234 and lysine 307 each participate in a glycyl lysine isopeptide (Lys-Gly) (interchain with G-Cter in ubiquitin) cross-link. Serine 313 is modified (phosphoserine; by AMPK). The short motif at 368-376 (NLLQEMLLG) is the 9aaTAD element. A disordered region spans residues 413 to 450 (SNGQMCEWPRPRGQAATPETPQPSPPSGSGSESYKLLP). Residues threonine 429 and threonine 432 each carry the phosphothreonine modification. Serine 436 bears the Phosphoserine mark. Lysine 458 carries the post-translational modification N6-acetyllysine.

This sequence belongs to the nuclear hormone receptor family. NR2 subfamily. As to quaternary structure, homodimerization is required for HNF4-alpha to bind to its recognition site. Interacts with CLOCK, BMAL1, CRY1, CRY2, PER1 and PER2. Interacts with NR0B2/SHP; the resulting heterodimer is transcriptionally inactive. Interacts with DDX3X; this interaction disrupts the interaction between HNF4 and NR0B2 that forms inactive heterodimers and enhances the formation of active HNF4 homodimers. Phosphorylation at Ser-313 by AMPK reduces the ability to form homodimers and bind DNA. Phosphorylated in the recognition sequence R-R-S-S near the DNA-binding domain; phosphorylation results in decrease in DNA-binding activity. Phosphorylation of HNF4 depends on the diet and is decreased by a carbohydrate-rich diet and is increased by fasting. In terms of processing, the N-terminus is blocked. Post-translationally, acetylation at Lys-458 lowers transcriptional activation by about two-fold. In terms of tissue distribution, liver, kidney and intestine.

Its subcellular location is the nucleus. Functionally, transcriptional regulator which controls the expression of hepatic genes during the transition of endodermal cells to hepatic progenitor cells, facilitating the recruitment of RNA pol II to the promoters of target genes. Activates the transcription of CYP2C38. Represses the CLOCK-BMAL1 transcriptional activity and is essential for circadian rhythm maintenance and period regulation in the liver and colon cells. This Rattus norvegicus (Rat) protein is Hepatocyte nuclear factor 4-alpha (Hnf4a).